Consider the following 334-residue polypeptide: Chemotactic signal transduction system substrate-binding protein CosB (334 aa).

Positions 1–29 are cleaved as a signal peptide; that stretch reads MMDTPEHASTSSRRQLLGMLAAGGTTAVA.

It belongs to the OsmX family.

It localises to the cell membrane. Functionally, mediates chemotaxis towards compatible osmolytes. May function as a receptor that binds the osmolytes and transduces a signal to CosT. Has probably no additional role in transport. In Halobacterium salinarum (strain ATCC 29341 / DSM 671 / R1), this protein is Chemotactic signal transduction system substrate-binding protein CosB (cosB).